We begin with the raw amino-acid sequence, 237 residues long: MTPHRLLPPLLLTLLLAARPGGALARCPGCGQGVSAGCPGGCAEEEDGGPAAEGCAEAGGCLRREGQQCGVYTPNCAPGLQCQPPEKEDLPLRALLQGRGRCGRARTPSGENPKESKPQAGTARSQDVNRRDQQRNSGTSTTPSRSNSGGVQDTEMGPCRKHLDSVLQQLQTEVFRGAHTLYVPNCDHRGFYRKRQCRSSQGQRRGPCWCVERMGQPLPGSSEGGDGSSLCPTGSSG.

The first 25 residues, 1 to 25 (MTPHRLLPPLLLTLLLAARPGGALA), serve as a signal peptide directing secretion. The IGFBP N-terminal domain occupies 26 to 105 (RCPGCGQGVS…LQGRGRCGRA (80 aa)). Cystine bridges form between Cys27-Cys30, Cys38-Cys42, Cys55-Cys61, Cys69-Cys82, and Cys76-Cys102. The segment at 101–158 (RCGRARTPSGENPKESKPQAGTARSQDVNRRDQQRNSGTSTTPSRSNSGGVQDTEMGP) is disordered. Residues 135 to 151 (RNSGTSTTPSRSNSGGV) are compositionally biased toward polar residues. In terms of domain architecture, Thyroglobulin type-1 spans 156-231 (MGPCRKHLDS…SEGGDGSSLC (76 aa)). 3 cysteine pairs are disulfide-bonded: Cys159/Cys186, Cys197/Cys208, and Cys210/Cys231. Residues 215-237 (GQPLPGSSEGGDGSSLCPTGSSG) are disordered.

As to quaternary structure, interacts (via C-terminal domain) with PHB2. O-glycosylated.

Its subcellular location is the secreted. IGF-binding proteins prolong the half-life of the IGFs and have been shown to either inhibit or stimulate the growth promoting effects of the IGFs on cell culture. They alter the interaction of IGFs with their cell surface receptors. Activates the MAPK signaling pathway and induces cell migration. In Bos taurus (Bovine), this protein is Insulin-like growth factor-binding protein 6 (IGFBP6).